The primary structure comprises 227 residues: E3 ubiquitin-protein ligase ZNRF1 (227 aa).

Residues Met-1–Gly-42 form a disordered region. The N-myristoyl glycine moiety is linked to residue Gly-2. The required for endosomal and lysosomal localization and myristoylation stretch occupies residues Gly-2 to Arg-10. A phosphoserine mark is found at Ser-50, Ser-52, and Ser-53. Residues Gly-65–Glu-105 are disordered. At Tyr-103 the chain carries Phosphotyrosine. Position 123 is a phosphoserine (Ser-123). An RING-type; atypical zinc finger spans residues Cys-184–Pro-225.

Interacts with AKT1, GLUL and TUBB2A. Interacts with ZNRF2. Interacts (via its RING domain) with UBE2N. Interacts (when phosphorylated) with YWHAE. N-myristoylation targets ZNRF1 to intracellular membranes. In terms of processing, phosphorylated by SRC at Tyr-103; leading to 'Lys-63'-linked ubiquitination of TLR3, lysosomal trafficking and degradation.

Its subcellular location is the endosome. It localises to the lysosome. The protein localises to the membrane. The protein resides in the cytoplasmic vesicle. It is found in the secretory vesicle. Its subcellular location is the synaptic vesicle membrane. It carries out the reaction S-ubiquitinyl-[E2 ubiquitin-conjugating enzyme]-L-cysteine + [acceptor protein]-L-lysine = [E2 ubiquitin-conjugating enzyme]-L-cysteine + N(6)-ubiquitinyl-[acceptor protein]-L-lysine.. It participates in protein modification; protein ubiquitination. Functionally, E3 ubiquitin-protein ligase that plays a role in different processes including cell differentiation, receptor recycling or regulation of inflammation. Mediates the ubiquitination of AKT1 and GLUL, thereby playing a role in neuron cells differentiation. Plays a role in the establishment and maintenance of neuronal transmission and plasticity. Regulates Schwann cells differentiation by mediating ubiquitination of GLUL. Promotes neurodegeneration by mediating 'Lys-48'-linked polyubiquitination and subsequent degradation of AKT1 in axons: degradation of AKT1 prevents AKT1-mediated phosphorylation of GSK3B, leading to GSK3B activation and phosphorylation of DPYSL2/CRMP2 followed by destabilization of microtubule assembly in axons. Ubiquitinates the Na(+)/K(+) ATPase alpha-1 subunit/ATP1A1 and thereby influences its endocytosis and/or degradation. Controls ligand-induced EGFR signaling via mediating receptor ubiquitination and recruitment of the ESCRT machinery. Acts as a negative feedback mechanism controlling TLR3 trafficking by mediating TLR3 'Lys-63'-linked polyubiquitination to reduce type I IFN production. Modulates inflammation by promoting caveolin-1/CAV1 ubiquitination and degradation to regulate TLR4-activated immune response. This Mus musculus (Mouse) protein is E3 ubiquitin-protein ligase ZNRF1 (Znrf1).